Consider the following 328-residue polypeptide: tRNA-modifying protein YgfZ (328 aa).

2 residues coordinate folate: Trp28 and Trp190.

The protein belongs to the tRNA-modifying YgfZ family.

It localises to the cytoplasm. Functionally, folate-binding protein involved in regulating the level of ATP-DnaA and in the modification of some tRNAs. It is probably a key factor in regulatory networks that act via tRNA modification, such as initiation of chromosomal replication. This is tRNA-modifying protein YgfZ from Sodalis glossinidius (strain morsitans).